A 291-amino-acid chain; its full sequence is Kidney mitochondrial carrier protein 1 (291 aa).

Solcar repeat units follow at residues 7-96 (KPFI…LKRL), 104-189 (ETLV…TKKH), and 198-289 (DTVY…LKKL). The next 6 membrane-spanning stretches (helical) occupy residues 9–26 (FIYG…TFPI), 71–89 (GIAP…KIGT), 106–124 (LVLN…SCIA), 164–183 (GVSL…LPVY), 204–224 (FLSS…VDVV), and 264–283 (GFWP…FITY).

It belongs to the mitochondrial carrier (TC 2.A.29) family.

It localises to the mitochondrion inner membrane. It carries out the reaction sulfite(in) + sulfate(out) = sulfite(out) + sulfate(in). It catalyses the reaction thiosulfate(in) + sulfate(out) = thiosulfate(out) + sulfate(in). The catalysed reaction is sulfate(out) + phosphate(in) = sulfate(in) + phosphate(out). The enzyme catalyses oxalate(in) + sulfate(out) = oxalate(out) + sulfate(in). It carries out the reaction malonate(in) + sulfate(out) = malonate(out) + sulfate(in). It catalyses the reaction maleate(in) + sulfate(out) = maleate(out) + sulfate(in). The catalysed reaction is (S)-malate(in) + sulfate(out) = (S)-malate(out) + sulfate(in). The enzyme catalyses (3S)-citramalate(in) + sulfate(out) = (3S)-citramalate(out) + sulfate(in). It carries out the reaction (3R)-citramalate(in) + sulfate(out) = (3R)-citramalate(out) + sulfate(in). It catalyses the reaction sulfate(out) + succinate(in) = sulfate(in) + succinate(out). The catalysed reaction is (S,S)-tartrate(in) + sulfate(out) = (S,S)-tartrate(out) + sulfate(in). The enzyme catalyses (2R,3R)-tartrate(in) + sulfate(out) = (2R,3R)-tartrate(out) + sulfate(in). It carries out the reaction D-aspartate(in) + sulfate(out) = D-aspartate(out) + sulfate(in). It catalyses the reaction L-aspartate(in) + sulfate(out) = L-aspartate(out) + sulfate(in). The catalysed reaction is sulfate(in) = sulfate(out). The enzyme catalyses phosphate(in) = phosphate(out). It carries out the reaction (S)-malate(out) = (S)-malate(in). Probable transporter. Its function is as follows. Antiporter that transports inorganic anions (sulfate, sulfite, thiosulfate and phosphate) and, to a lesser extent, a variety of dicarboxylates (e.g. malonate, malate and citramalate) and, even more so, aspartate. The sulfate/sulfate exchange is much higher than the phosphate/phosphate and malate/malate exchanges. The transport affinities is higher for sulfate and thiosulfate than for any other substrate. May catalyze the export of sulfite and thiosulfate (the hydrogen sulfide degradation products) from the mitochondria, thereby modulating the level of the hydrogen sulfide. Also may mediate a very low unidirectional transport of sulfate, phosphate and (S)-malate. The chain is Kidney mitochondrial carrier protein 1 from Xenopus laevis (African clawed frog).